The primary structure comprises 306 residues: D-alanine--D-alanine ligase B (306 aa).

The 203-residue stretch at 101–303 (KLLWQGAGLP…FSQLVVRILE (203 aa)) folds into the ATP-grasp domain. 134–189 (ISALGLPVIVKPSREGSSVGMSKVVAENALQDALRLAFQHDEEVLIEKWLSGPEFT) serves as a coordination point for ATP. Mg(2+) contacts are provided by Asp-257, Glu-270, and Asn-272.

Belongs to the D-alanine--D-alanine ligase family. The cofactor is Mg(2+). Mn(2+) serves as cofactor.

The protein resides in the cytoplasm. The catalysed reaction is 2 D-alanine + ATP = D-alanyl-D-alanine + ADP + phosphate + H(+). Its pathway is cell wall biogenesis; peptidoglycan biosynthesis. In terms of biological role, cell wall formation. This is D-alanine--D-alanine ligase B from Shigella flexneri.